The chain runs to 925 residues: Centrosomal protein of 104 kDa (925 aa).

Positions 209–289 (EVAQIIRKLD…RAEVYEQLEL (81 aa)) form a coiled coil. 2 HEAT repeats span residues 529 to 567 (TIPV…LQII) and 604 to 640 (GFTI…YRQH). Residues 677–725 (DAEMRARRKAATEEAEKQKKEEIKALQGQLAALKEIQAEVQEKESDAVK) are a coiled coil. The interval 883–925 (PALQPGKSSAVAASGPLGSKAGSKIPTPKGGLSKSSSRTYAKR) is disordered. Over residues 915–925 (SKSSSRTYAKR) the composition is skewed to polar residues.

As to quaternary structure, interacts with CCP110 and CEP97. Interacts with ARMC9, TOGARAM1, CCDC66 and CSPP1.

The protein localises to the cell projection. It localises to the cilium. Its subcellular location is the cytoplasm. The protein resides in the cytoskeleton. It is found in the microtubule organizing center. The protein localises to the centrosome. It localises to the centriole. Its subcellular location is the spindle pole. In terms of biological role, required for ciliogenesis and for structural integrity at the ciliary tip. The sequence is that of Centrosomal protein of 104 kDa (CEP104) from Homo sapiens (Human).